The primary structure comprises 182 residues: Isopentenyl-diphosphate Delta-isomerase (182 aa).

2 residues coordinate Mn(2+): His-25 and His-32. The 135-residue stretch at 30 to 164 folds into the Nudix hydrolase domain; it reads LLHLAFSSWL…PWAFSPWMVM (135 aa). Cys-67 is an active-site residue. Cys-67 lines the Mg(2+) pocket. His-69 contacts Mn(2+). Mg(2+) is bound at residue Glu-87. Mn(2+) is bound by residues Glu-114 and Glu-116. Residue Glu-116 is part of the active site.

This sequence belongs to the IPP isomerase type 1 family. In terms of assembly, homodimer. It depends on Mg(2+) as a cofactor. Requires Mn(2+) as cofactor.

The protein localises to the cytoplasm. It carries out the reaction isopentenyl diphosphate = dimethylallyl diphosphate. Its pathway is isoprenoid biosynthesis; dimethylallyl diphosphate biosynthesis; dimethylallyl diphosphate from isopentenyl diphosphate: step 1/1. In terms of biological role, catalyzes the 1,3-allylic rearrangement of the homoallylic substrate isopentenyl (IPP) to its highly electrophilic allylic isomer, dimethylallyl diphosphate (DMAPP). The sequence is that of Isopentenyl-diphosphate Delta-isomerase from Escherichia coli O6:H1 (strain CFT073 / ATCC 700928 / UPEC).